The sequence spans 214 residues: ATP phosphoribosyltransferase (214 aa).

Belongs to the ATP phosphoribosyltransferase family. Short subfamily. Heteromultimer composed of HisG and HisZ subunits.

It is found in the cytoplasm. It catalyses the reaction 1-(5-phospho-beta-D-ribosyl)-ATP + diphosphate = 5-phospho-alpha-D-ribose 1-diphosphate + ATP. It functions in the pathway amino-acid biosynthesis; L-histidine biosynthesis; L-histidine from 5-phospho-alpha-D-ribose 1-diphosphate: step 1/9. Catalyzes the condensation of ATP and 5-phosphoribose 1-diphosphate to form N'-(5'-phosphoribosyl)-ATP (PR-ATP). Has a crucial role in the pathway because the rate of histidine biosynthesis seems to be controlled primarily by regulation of HisG enzymatic activity. In Methylibium petroleiphilum (strain ATCC BAA-1232 / LMG 22953 / PM1), this protein is ATP phosphoribosyltransferase.